We begin with the raw amino-acid sequence, 515 residues long: MCQVGEDYGEPAPEEPPPAPRPSREQKCVKCKEAQPVVVIRAGDAFCRDCFKAFYVHKFRAMLGKNRLIFPGEKVLLAWSGGPSSSSMVWQVLEGLSQDSAKRLRFVAGVIFVDEGAACGQSLEERSKTLAEVKPILQATGFPWHVVALEEVFSLPPSVLWCSAQELVGSEGAYKAAVDSFLQQQHVLGAGGGPGPTQGEEQPPQPPLDPQNLARPPAPAQTEALSQLFCSVRTLTAKEELLQTLRTHLILHMARAHGYSKVMTGDSCTRLAIKLMTNLALGRGAFLAWDTGFSDERHGDVVVVRPMRDHTLKEVAFYNRLFSVPSVFTPAVDTKAPEKASIHRLMEAFILRLQTQFPSTVSTVYRTSEKLVKGPRDGPAAGDSGPRCLLCMCALDVDAADSATAFGAQTSSRLSQMQSPIPLTETRTPPGPCCSPGVGWAQRCGQGACRREDPQACIEEQLCYSCRVNMKDLPSLDPLPPYILAEAQLRTQRAWGLQEIRDCLIEDSDDEAGQS.

2 disordered regions span residues 1–24 (MCQVGEDYGEPAPEEPPPAPRPSR) and 188–217 (LGAGGGPGPTQGEEQPPQPPLDPQNLARPP). N-acetylcysteine is present on C2. A phosphoserine mark is found at S415, S419, S435, and S508.

Belongs to the CTU2/NCS2 family. Component of a complex at least composed of URM1, CTU2/NCS2 and CTU1/ATPBD3.

Its subcellular location is the cytoplasm. It participates in tRNA modification; 5-methoxycarbonylmethyl-2-thiouridine-tRNA biosynthesis. Functionally, plays a central role in 2-thiolation of mcm(5)S(2)U at tRNA wobble positions of tRNA(Lys), tRNA(Glu) and tRNA(Gln). May act by forming a heterodimer with CTU1/ATPBD3 that ligates sulfur from thiocarboxylated URM1 onto the uridine of tRNAs at wobble position. The sequence is that of Cytoplasmic tRNA 2-thiolation protein 2 from Homo sapiens (Human).